The following is a 260-amino-acid chain: Small ribosomal subunit protein uS2 (260 aa).

The interval 224 to 260 (GRQGQDAGEDSAEKTFADTADGEGDFEESSNNENQEA) is disordered. Residues 243–260 (ADGEGDFEESSNNENQEA) are compositionally biased toward acidic residues.

The protein belongs to the universal ribosomal protein uS2 family.

This Oenococcus oeni (strain ATCC BAA-331 / PSU-1) protein is Small ribosomal subunit protein uS2.